The primary structure comprises 388 residues: Ribonucleoside-diphosphate reductase subunit beta (388 aa).

Aspartate 84, glutamate 115, and histidine 118 together coordinate Fe cation. Tyrosine 122 is an active-site residue. Residues glutamate 212, glutamate 247, and histidine 250 each contribute to the Fe cation site.

Belongs to the ribonucleoside diphosphate reductase small chain family. In terms of assembly, heterodimer of a large and a small subunit. The cofactor is Fe cation.

The catalysed reaction is a 2'-deoxyribonucleoside 5'-diphosphate + [thioredoxin]-disulfide + H2O = a ribonucleoside 5'-diphosphate + [thioredoxin]-dithiol. In terms of biological role, provides the precursors necessary for DNA synthesis. Catalyzes the biosynthesis of deoxyribonucleotides from the corresponding ribonucleotides. The protein is Ribonucleoside-diphosphate reductase subunit beta (NRDB) of Escherichia coli (Bacteriophage T4).